Consider the following 235-residue polypeptide: Large ribosomal subunit protein uL2 (235 aa).

Residues 197–218 (VAMNPVDHPHGGGEGKTSGGRH) are disordered.

It belongs to the universal ribosomal protein uL2 family. In terms of assembly, part of the 50S ribosomal subunit. Forms a bridge to the 30S subunit in the 70S ribosome.

Its function is as follows. One of the primary rRNA binding proteins. Required for association of the 30S and 50S subunits to form the 70S ribosome, for tRNA binding and peptide bond formation. It has been suggested to have peptidyltransferase activity; this is somewhat controversial. Makes several contacts with the 16S rRNA in the 70S ribosome. This Carsonella ruddii (strain PV) protein is Large ribosomal subunit protein uL2 (rplB).